The following is a 129-amino-acid chain: UPF0102 protein RD1_1191 (129 aa).

This sequence belongs to the UPF0102 family.

This chain is UPF0102 protein RD1_1191, found in Roseobacter denitrificans (strain ATCC 33942 / OCh 114) (Erythrobacter sp. (strain OCh 114)).